The sequence spans 265 residues: Small ribosomal subunit protein uS3 (265 aa).

A KH type-2 domain is found at 43–111 (IRTMLKTSLD…QIQLNILEVK (69 aa)). The interval 217–265 (AREQANQKSSRPERRNDRSDGRTGDRRTNAPRTAPAAEAAPVAAAGVEA) is disordered. The span at 226–244 (SRPERRNDRSDGRTGDRRT) shows a compositional bias: basic and acidic residues. Low complexity predominate over residues 250–265 (APAAEAAPVAAAGVEA).

The protein belongs to the universal ribosomal protein uS3 family. As to quaternary structure, part of the 30S ribosomal subunit. Forms a tight complex with proteins S10 and S14.

Binds the lower part of the 30S subunit head. Binds mRNA in the 70S ribosome, positioning it for translation. This chain is Small ribosomal subunit protein uS3, found in Clavibacter michiganensis subsp. michiganensis (strain NCPPB 382).